Reading from the N-terminus, the 309-residue chain is ATP synthase gamma chain (309 aa).

It belongs to the ATPase gamma chain family. As to quaternary structure, F-type ATPases have 2 components, CF(1) - the catalytic core - and CF(0) - the membrane proton channel. CF(1) has five subunits: alpha(3), beta(3), gamma(1), delta(1), epsilon(1). CF(0) has three main subunits: a, b and c.

Its subcellular location is the cell membrane. Produces ATP from ADP in the presence of a proton gradient across the membrane. The gamma chain is believed to be important in regulating ATPase activity and the flow of protons through the CF(0) complex. This is ATP synthase gamma chain from Salinispora tropica (strain ATCC BAA-916 / DSM 44818 / JCM 13857 / NBRC 105044 / CNB-440).